A 138-amino-acid chain; its full sequence is Large ribosomal subunit protein uL16c (138 aa).

This sequence belongs to the universal ribosomal protein uL16 family. Part of the 50S ribosomal subunit.

It is found in the plastid. The protein resides in the chloroplast. The polypeptide is Large ribosomal subunit protein uL16c (Emiliania huxleyi (Coccolithophore)).